The chain runs to 276 residues: Eukaryotic translation initiation factor 3 subunit G (276 aa).

Residue Ser-148 is modified to Phosphoserine. Residues Thr-195–Lys-274 form the RRM domain.

The protein belongs to the eIF-3 subunit G family. In terms of assembly, component of the eukaryotic translation initiation factor 3 (eIF-3) complex.

The protein resides in the cytoplasm. RNA-binding component of the eukaryotic translation initiation factor 3 (eIF-3) complex, which is involved in protein synthesis of a specialized repertoire of mRNAs and, together with other initiation factors, stimulates binding of mRNA and methionyl-tRNAi to the 40S ribosome. The eIF-3 complex specifically targets and initiates translation of a subset of mRNAs involved in cell proliferation. This subunit can bind 18S rRNA. The chain is Eukaryotic translation initiation factor 3 subunit G from Debaryomyces hansenii (strain ATCC 36239 / CBS 767 / BCRC 21394 / JCM 1990 / NBRC 0083 / IGC 2968) (Yeast).